Consider the following 460-residue polypeptide: Cell death abnormality protein 8 (460 aa).

At 1–45 (MYLKKHESKLLLIPKNEDKEDAGIIAVLTDRVPSVLIVRWFDLFC) the chain is on the cytoplasmic side. The chain crosses the membrane as a helical span at residues 46 to 66 (FGFAMCSYVLDFFSDIGIAIF). At 67–77 (HFWAGRHLSGA) the chain is on the extracellular side. A helical transmembrane segment spans residues 78-98 (LVLTFALIPSVIINIISMVWM). The Cytoplasmic portion of the chain corresponds to 99–123 (LDDEMHWKRRAHPRRTGTFELNQKR). The chain crosses the membrane as a helical span at residues 124–144 (FISLGKMITLCIFQMGPLFWY). Over 145-219 (YKALYYGWMF…YYISGKYPYW (75 aa)) the chain is Extracellular. Residues 220-240 (LYFQAASLTLSIISISWSVVV) form a helical membrane-spanning segment. Over 241-274 (QNRSLRMTRDDKVNIWPHEAVLQFCWRFLTILAR) the chain is Cytoplasmic. The helical transmembrane segment at 275–295 (IITLVAFVLLFGIYVVFLIFG) threads the bilayer. Topologically, residues 296–320 (HLIVTLVHVIFLQALHIEACTHIEK) are extracellular. A helical membrane pass occupies residues 321–341 (LLLLINAMIHLFTPFNMAEGN). Residues 342–353 (TRYRYLVAYTVE) are Cytoplasmic-facing. A helical membrane pass occupies residues 354-374 (FIEMMIIFLLLPTPLDAFPLI). Residues 375-378 (EKIR) lie on the Extracellular side of the membrane. Residues 379-399 (IGVPATFFIGIFIMLIYYKFF) form a helical membrane-spanning segment. At 400–460 (HPNRRQDLEA…SLLEEDECHN (61 aa)) the chain is on the cytoplasmic side.

It belongs to the XK family. Cleavage by ced-3 activates ced-8 function in promoting phosphatidylserine exposure at the surface of apoptotic cells.

The protein localises to the cell membrane. In terms of biological role, acts downstream of ced-9 and caspase ced-3 to promote phosphatidylserine exposure on apoptotic cell surface, possibly by mediating phospholipid scrambling. Phosphatidylserine is a specific marker only present at the surface of apoptotic cells and acts as a specific signal for engulfment. Regulates apoptosis kinetics during embryonic development. Not required for engulfment of germ cell corpses. The sequence is that of Cell death abnormality protein 8 from Caenorhabditis briggsae.